We begin with the raw amino-acid sequence, 329 residues long: Peroxidase 18 (329 aa).

The signal sequence occupies residues methionine 1 to alanine 29. Disulfide bonds link cysteine 40–cysteine 116, cysteine 73–cysteine 78, cysteine 122–cysteine 325, and cysteine 201–cysteine 235. Catalysis depends on histidine 71, which acts as the Proton acceptor. Positions 72, 75, 77, 79, and 81 each coordinate Ca(2+). Asparagine 87 is a glycosylation site (N-linked (GlcNAc...) asparagine). Isoleucine 164 lines the substrate pocket. Histidine 194 lines the heme b pocket. Threonine 195 contacts Ca(2+). 3 residues coordinate Ca(2+): aspartate 249, threonine 252, and aspartate 257.

It belongs to the peroxidase family. Classical plant (class III) peroxidase subfamily. Heme b serves as cofactor. Requires Ca(2+) as cofactor.

The protein localises to the secreted. It carries out the reaction 2 a phenolic donor + H2O2 = 2 a phenolic radical donor + 2 H2O. In terms of biological role, removal of H(2)O(2), oxidation of toxic reductants, biosynthesis and degradation of lignin, suberization, auxin catabolism, response to environmental stresses such as wounding, pathogen attack and oxidative stress. These functions might be dependent on each isozyme/isoform in each plant tissue. This is Peroxidase 18 (PER18) from Arabidopsis thaliana (Mouse-ear cress).